We begin with the raw amino-acid sequence, 74 residues long: Putative membrane protein insertion efficiency factor (74 aa).

Belongs to the UPF0161 family.

The protein localises to the cell membrane. In terms of biological role, could be involved in insertion of integral membrane proteins into the membrane. This Anoxybacillus flavithermus (strain DSM 21510 / WK1) protein is Putative membrane protein insertion efficiency factor.